Reading from the N-terminus, the 131-residue chain is Profilin (131 aa).

Belongs to the profilin family. Occurs in many kinds of cells as a complex with monomeric actin in a 1:1 ratio.

The protein localises to the cytoplasm. The protein resides in the cytoskeleton. Binds to actin and affects the structure of the cytoskeleton. At high concentrations, profilin prevents the polymerization of actin, whereas it enhances it at low concentrations. By binding to PIP2, it inhibits the formation of IP3 and DG. The sequence is that of Profilin from Litchi chinensis (Lychee).